Reading from the N-terminus, the 519-residue chain is Ribonuclease Y (519 aa).

Residues 3–23 (LMIFAYIAIGAVLGAGTGYLL) form a helical membrane-spanning segment. The 64-residue stretch at 209–272 (TVTAVTLPSE…QVAKMALERL (64 aa)) folds into the KH domain. Positions 335 to 428 (VLQHSLEVSA…VQAADSISGA (94 aa)) constitute an HD domain.

The protein belongs to the RNase Y family.

It is found in the cell membrane. Its function is as follows. Endoribonuclease that initiates mRNA decay. This Nitratidesulfovibrio vulgaris (strain ATCC 29579 / DSM 644 / CCUG 34227 / NCIMB 8303 / VKM B-1760 / Hildenborough) (Desulfovibrio vulgaris) protein is Ribonuclease Y.